A 142-amino-acid polypeptide reads, in one-letter code: Ribosome-binding factor A (142 aa).

The disordered stretch occupies residues 123 to 142 (VQRDLDSAPEDDEPETGTGH). Residues 129-142 (SAPEDDEPETGTGH) show a composition bias toward acidic residues.

The protein belongs to the RbfA family. As to quaternary structure, monomer. Binds 30S ribosomal subunits, but not 50S ribosomal subunits or 70S ribosomes.

It localises to the cytoplasm. Functionally, one of several proteins that assist in the late maturation steps of the functional core of the 30S ribosomal subunit. Associates with free 30S ribosomal subunits (but not with 30S subunits that are part of 70S ribosomes or polysomes). Required for efficient processing of 16S rRNA. May interact with the 5'-terminal helix region of 16S rRNA. The chain is Ribosome-binding factor A from Methylobacterium radiotolerans (strain ATCC 27329 / DSM 1819 / JCM 2831 / NBRC 15690 / NCIMB 10815 / 0-1).